We begin with the raw amino-acid sequence, 548 residues long: Chaperonin GroEL (548 aa).

ATP-binding positions include 30 to 33 (TLGP), Lys51, 87 to 91 (DGTTT), Gly415, and Asp496. The tract at residues 527–548 (SDKEDAMPPMRGGMGGMGGMDF) is disordered. Residues 538–548 (GGMGGMGGMDF) are compositionally biased toward gly residues.

It belongs to the chaperonin (HSP60) family. As to quaternary structure, forms a cylinder of 14 subunits composed of two heptameric rings stacked back-to-back. Interacts with the co-chaperonin GroES.

It localises to the cytoplasm. It catalyses the reaction ATP + H2O + a folded polypeptide = ADP + phosphate + an unfolded polypeptide.. Functionally, together with its co-chaperonin GroES, plays an essential role in assisting protein folding. The GroEL-GroES system forms a nano-cage that allows encapsulation of the non-native substrate proteins and provides a physical environment optimized to promote and accelerate protein folding. This chain is Chaperonin GroEL, found in Rickettsia akari (strain Hartford).